A 200-amino-acid polypeptide reads, in one-letter code: uncharacterized protein (200 aa).

In terms of biological role, involved in osmoadaptation. This is an uncharacterized protein from Emericella nidulans (strain FGSC A4 / ATCC 38163 / CBS 112.46 / NRRL 194 / M139) (Aspergillus nidulans).